We begin with the raw amino-acid sequence, 469 residues long: 3-isopropylmalate dehydratase large subunit (469 aa).

The [4Fe-4S] cluster site is built by Cys350, Cys410, and Cys413.

It belongs to the aconitase/IPM isomerase family. LeuC type 1 subfamily. In terms of assembly, heterodimer of LeuC and LeuD. The cofactor is [4Fe-4S] cluster.

It catalyses the reaction (2R,3S)-3-isopropylmalate = (2S)-2-isopropylmalate. The protein operates within amino-acid biosynthesis; L-leucine biosynthesis; L-leucine from 3-methyl-2-oxobutanoate: step 2/4. Its function is as follows. Catalyzes the isomerization between 2-isopropylmalate and 3-isopropylmalate, via the formation of 2-isopropylmaleate. In Sinorhizobium fredii (strain NBRC 101917 / NGR234), this protein is 3-isopropylmalate dehydratase large subunit.